The chain runs to 1015 residues: Probable beta-galactosidase B (1015 aa).

A signal peptide spans 1-20 (MAHIYRLLLLLLSNLWFSTA). N-linked (GlcNAc...) asparagine glycosylation is present at Asn-23. Position 90 (Tyr-90) interacts with substrate. N-linked (GlcNAc...) asparagine glycans are attached at residues Asn-99 and Asn-100. Substrate is bound by residues Asn-135, Ala-136, and Glu-137. N-linked (GlcNAc...) asparagine glycosylation is present at Asn-172. Asn-195 serves as a coordination point for substrate. The active-site Proton donor is the Glu-196. The N-linked (GlcNAc...) asparagine glycan is linked to Asn-211. Tyr-265 is a binding site for substrate. Residues Cys-271 and Cys-324 are joined by a disulfide bond. Residue Glu-308 is the Nucleophile of the active site. Residue Tyr-373 coordinates substrate. Asn-411, Asn-456, Asn-554, Asn-679, Asn-735, Asn-775, and Asn-821 each carry an N-linked (GlcNAc...) asparagine glycan.

The protein belongs to the glycosyl hydrolase 35 family.

It is found in the secreted. It catalyses the reaction Hydrolysis of terminal non-reducing beta-D-galactose residues in beta-D-galactosides.. Functionally, cleaves beta-linked terminal galactosyl residues from gangliosides, glycoproteins, and glycosaminoglycans. The sequence is that of Probable beta-galactosidase B (lacB) from Aspergillus fumigatus (strain CBS 144.89 / FGSC A1163 / CEA10) (Neosartorya fumigata).